Here is a 596-residue protein sequence, read N- to C-terminus: NADH-quinone oxidoreductase subunit C/D (596 aa).

The tract at residues 1–186 (MVDIMCNDST…NPFILTKQKE (186 aa)) is NADH dehydrogenase I subunit C. Residues 210–596 (NFMFLNLGPN…IDFVMSDVDR (387 aa)) are NADH dehydrogenase I subunit D.

This sequence in the N-terminal section; belongs to the complex I 30 kDa subunit family. The protein in the C-terminal section; belongs to the complex I 49 kDa subunit family. In terms of assembly, NDH-1 is composed of 13 different subunits. Subunits NuoB, CD, E, F, and G constitute the peripheral sector of the complex.

Its subcellular location is the cell inner membrane. The catalysed reaction is a quinone + NADH + 5 H(+)(in) = a quinol + NAD(+) + 4 H(+)(out). Functionally, NDH-1 shuttles electrons from NADH, via FMN and iron-sulfur (Fe-S) centers, to quinones in the respiratory chain. The immediate electron acceptor for the enzyme in this species is believed to be ubiquinone. Couples the redox reaction to proton translocation (for every two electrons transferred, four hydrogen ions are translocated across the cytoplasmic membrane), and thus conserves the redox energy in a proton gradient. In Blochmanniella pennsylvanica (strain BPEN), this protein is NADH-quinone oxidoreductase subunit C/D.